A 664-amino-acid polypeptide reads, in one-letter code: Protein fem-1 homolog CG6966 (664 aa).

ANK repeat units lie at residues 40–70 (NGATPLVISCRNGHYDIVEYLLTKCRANVEQ), 82–111 (EDAPPLWCAAAAGHLGIVKMLVRRGANVNS), 115–144 (TNSTPLRAACFDGHYEIVKYLVHHGADFEV), 148–177 (HGHTCLMIACYKGHFRIAQYLLSLNADVNR), 181–210 (KGNTALHDCAESGSLQILQLLLKHGATMDV), and 213–242 (YGMTPLLAASVTGHMPIVEHLITLPCVSRE). TPR repeat units lie at residues 245–279 (IHALELLGATYVDRKRDMAAALNLWRRALEERAVE) and 335–368 (SYYIRFRGAHYADAGRFDRCIELWSYALTMQQKI). Positions 433–460 (QQKDQQHPQKQLPAADKSPSCSASSSAS) are disordered. Residues 450–460 (SPSCSASSSAS) show a composition bias toward low complexity. 2 ANK repeats span residues 529–571 (FDRT…DPNA) and 575–605 (AGNTPLHLATMQPYVEPLSHILLEGGAHLDT).

It belongs to the fem-1 family. As to quaternary structure, component of a CRL2 E3 ubiquitin-protein ligase complex, also named ECS (Elongin BC-CUL2/5-SOCS-box protein) complex.

The protein operates within protein modification; protein ubiquitination. Functionally, substrate-recognition component of a Cul2-RING (CRL2) E3 ubiquitin-protein ligase complex of the DesCEND (destruction via C-end degrons) pathway, which recognizes a C-degron located at the extreme C terminus of target proteins, leading to their ubiquitination and degradation. The C-degron recognized by the DesCEND pathway is usually a motif of less than ten residues and can be present in full-length proteins, truncated proteins or proteolytically cleaved forms. This is Protein fem-1 homolog CG6966 from Drosophila melanogaster (Fruit fly).